Reading from the N-terminus, the 283-residue chain is MARRPGVPAAYGDEFSFVSPLVKYLLFFFNMLFWVISMVMVAVGVYARLMKHAEAALACLAVDPAILLIVVGVLMFLLTFCGCIGSLRENICLLQTFSLCLTIVFLLQLAAGILGFVFSDKARGKVSEIINNAIVHYRDDLDLQNLIDFGQKKFSCCGGISYRDWSQNMYFNCSEDNPSRERCSVPYSCCLPTPNQAVINTMCGQGMQALDYLEASKVIYTNGCIDKLVNWIHSNLFLLGGVALGLAIPQLVGILLSQVLVNQIKDQIKLQLYNQQHRADPWY.

At 1-24 the chain is on the cytoplasmic side; the sequence is MARRPGVPAAYGDEFSFVSPLVKY. A helical membrane pass occupies residues 25–45; it reads LLFFFNMLFWVISMVMVAVGV. At 46–64 the chain is on the extracellular side; it reads YARLMKHAEAALACLAVDP. A helical membrane pass occupies residues 65–85; the sequence is AILLIVVGVLMFLLTFCGCIG. At 86–96 the chain is on the cytoplasmic side; it reads SLRENICLLQT. A helical membrane pass occupies residues 97–117; sequence FSLCLTIVFLLQLAAGILGFV. The Extracellular segment spans residues 118-235; the sequence is FSDKARGKVS…DKLVNWIHSN (118 aa). 4 cysteine pairs are disulfide-bonded: Cys156/Cys224, Cys157/Cys189, Cys173/Cys183, and Cys190/Cys203. Residue Asn172 is glycosylated (N-linked (GlcNAc...) asparagine). The helical transmembrane segment at 236-256 threads the bilayer; that stretch reads LFLLGGVALGLAIPQLVGILL. At 257-283 the chain is on the cytoplasmic side; sequence SQVLVNQIKDQIKLQLYNQQHRADPWY.

Belongs to the tetraspanin (TM4SF) family. As to quaternary structure, homodimer; disulfide-linked. Interacts (via extracellular domain) with ADAM10 (via extracellular domain). Interacts (via cytoplasmic domain) with PLEKHA7 (via WW domains); the interaction is dependent on PDZD11 being bound to PLEKHA7 and facilitates the docking of ADAM10 to zonula adherens. As to expression, predominantly expressed in erythroblasts.

It localises to the cell membrane. Its subcellular location is the cell junction. The protein localises to the adherens junction. The protein resides in the cytoplasm. Its function is as follows. Part of TspanC8 subgroup, composed of 6 members that interact with the transmembrane metalloprotease ADAM10. This interaction is required for ADAM10 exit from the endoplasmic reticulum and for enzymatic maturation and trafficking to the cell surface as well as substrate specificity. Different TspanC8/ADAM10 complexes have distinct substrates. Plays an important role in normal erythropoiesis. It has a role in the differentiation of erythroid progenitors. Negatively regulates ligand-induced Notch activity probably by regulating ADAM10 activity. Mediates docking of ADAM10 to zonula adherens by interacting with ADAM10 and, in a PDZD11-dependent manner, with the zonula adherens protein PLEKHA7. This chain is Tetraspanin-33 (Tspan33), found in Mus musculus (Mouse).